The sequence spans 519 residues: Cytochrome P450 monooxygenase AtmP (519 aa).

The chain crosses the membrane as a helical span at residues 21 to 41 (SMLLVVTLVILFLWFIIPSPV). A heme-binding site is contributed by Cys-457.

It belongs to the cytochrome P450 family. Heme serves as cofactor.

It is found in the membrane. The protein operates within secondary metabolite biosynthesis. In terms of biological role, cytochrome P450 monooxygenase; part of the ATM2 gene cluster that mediates the biosynthesis of aflatrem, a tremorgenic mycotoxin with acute neurotoxic effects. Synthesis of geranylgeranyl diphosphate (GGPP) by AtmG (a GGPP synthase) precedes condensation of GGPP with indole 3-glycerol phosphate, followed by epoxidation and cyclization by AtmM (a FAD-dependent monooxygenase) and AtmC (a prenyltransferase) to produce paspaline. AtmB is also essential for paspaline production, but its exact role has not been identified yet. AtmP, a cytochrome P450 monooxygenase, subsequently converts paspaline to 13-desoxypaxilline via PC-M6 by removal of the C-30 methyl group and oxidation at C-10. AtmQ, a cytochrome P450 monooxygenase, then catalyzes the oxidation of 13-desoxypaxilline, first at C-7 to produce paspalicine and then at C-13 to form paspalinine. Finally, AtmD prenylates paspalinine to form aflatrem. The protein is Cytochrome P450 monooxygenase AtmP of Aspergillus flavus.